A 699-amino-acid polypeptide reads, in one-letter code: Elongation factor G (699 aa).

Residues 8–288 form the tr-type G domain; the sequence is EDYRNFGIMA…AVVDYLPSPL (281 aa). GTP-binding positions include 17–24, 86–90, and 140–143; these read AHIDAGKT, DTPGH, and NKMD.

Belongs to the TRAFAC class translation factor GTPase superfamily. Classic translation factor GTPase family. EF-G/EF-2 subfamily.

It localises to the cytoplasm. Functionally, catalyzes the GTP-dependent ribosomal translocation step during translation elongation. During this step, the ribosome changes from the pre-translocational (PRE) to the post-translocational (POST) state as the newly formed A-site-bound peptidyl-tRNA and P-site-bound deacylated tRNA move to the P and E sites, respectively. Catalyzes the coordinated movement of the two tRNA molecules, the mRNA and conformational changes in the ribosome. In Agrobacterium fabrum (strain C58 / ATCC 33970) (Agrobacterium tumefaciens (strain C58)), this protein is Elongation factor G.